Here is a 184-residue protein sequence, read N- to C-terminus: Urease accessory protein UreE (184 aa).

Residues 147-184 form a disordered region; sequence EHHGHSHSHSHSHDHDHDHDHDHQHGPSCSHGHHHGHR. Positions 157-171 are enriched in basic and acidic residues; it reads HSHDHDHDHDHDHQH.

The protein belongs to the UreE family.

The protein resides in the cytoplasm. Functionally, involved in urease metallocenter assembly. Binds nickel. Probably functions as a nickel donor during metallocenter assembly. This chain is Urease accessory protein UreE, found in Burkholderia mallei (strain ATCC 23344).